We begin with the raw amino-acid sequence, 217 residues long: Zinc finger CCHC-type and RNA-binding motif-containing protein 1 (217 aa).

An RRM domain is found at 10 to 88 (STVYVSNLPF…RVIKASIAID (79 aa)). The CCHC-type zinc finger occupies 105-122 (SKCYECGESGHLSYACPK). The segment at 120–217 (CPKNMLGERE…YFSDEEELSD (98 aa)) is disordered. Residues 145–163 (PEEEIEEVEVSEEEGEDPA) are compositionally biased toward acidic residues. Phosphoserine is present on residues serine 155, serine 210, and serine 216.

In terms of assembly, component of the U11/U12 snRNPs that are part of the U12-type spliceosome. Interacts with ZRSR1.

Its subcellular location is the nucleus. It localises to the nucleoplasm. The chain is Zinc finger CCHC-type and RNA-binding motif-containing protein 1 (Zcrb1) from Rattus norvegicus (Rat).